An 80-amino-acid polypeptide reads, in one-letter code: Anaphase-promoting complex subunit hcn1 (80 aa).

Met-1 is subject to N-acetylmethionine. The interval 26-54 (QTLDSESTTEEALQKNEESTRLSPEKKKI) is disordered. Over residues 37–54 (ALQKNEESTRLSPEKKKI) the composition is skewed to basic and acidic residues.

In terms of assembly, the APC/C is composed of at least 13 subunits: apc1, apc2, nuc2, apc4, apc5, cut9, apc8, apc10, apc11, hcn1, apc13, apc14 and apc15. Interacts directly (via N-terminus) with cut9.

Component of the anaphase promoting complex/cyclosome (APC/C), a cell cycle-regulated E3 ubiquitin-protein ligase complex that controls progression through mitosis and the G1 phase of the cell cycle. The APC/C is thought to confer substrate specificity and, in the presence of ubiquitin-conjugating E2 enzymes, it catalyzes the formation of protein-ubiquitin conjugates that are subsequently degraded by the 26S proteasome. Has a role in assembling cut9 in the 20S APC/cyclosome. The polypeptide is Anaphase-promoting complex subunit hcn1 (hcn1) (Schizosaccharomyces pombe (strain 972 / ATCC 24843) (Fission yeast)).